We begin with the raw amino-acid sequence, 124 residues long: Large ribosomal subunit protein uL18 (124 aa).

The protein belongs to the universal ribosomal protein uL18 family. In terms of assembly, part of the 50S ribosomal subunit; part of the 5S rRNA/L5/L18/L25 subcomplex. Contacts the 5S and 23S rRNAs.

Functionally, this is one of the proteins that bind and probably mediate the attachment of the 5S RNA into the large ribosomal subunit, where it forms part of the central protuberance. The protein is Large ribosomal subunit protein uL18 of Aquifex aeolicus (strain VF5).